Reading from the N-terminus, the 678-residue chain is Protein KHNYN (678 aa).

The residue at position 10 (Ser-10) is a Phosphoserine. Disordered stretches follow at residues Gln-222–Asp-251 and Leu-347–Gly-407. A compositionally biased stretch (pro residues) spans Pro-355–Pro-367. Residue Ser-359 is modified to Phosphoserine. Over residues Cys-370–Lys-388 the composition is skewed to basic and acidic residues. Residues Leu-437 to Glu-589 form the RNase NYN domain. The interval Ala-595 to Arg-633 is disordered. Residues Phe-610–Arg-633 show a composition bias toward basic and acidic residues.

Belongs to the N4BP1 family.

This is Protein KHNYN (KHNYN) from Homo sapiens (Human).